The primary structure comprises 1272 residues: CST complex subunit CTC1 (1272 aa).

The protein belongs to the CTC1 family. In terms of assembly, component of the CST complex, composed of CTC1, TEN1 and STN1. Interacts with POT1A.

The protein resides in the nucleus. The protein localises to the chromosome. It is found in the telomere. Functionally, component of the CST complex, a complex that binds to single-stranded DNA and is required to protect telomeres from DNA degradation. The CST complex binds single-stranded DNA with high affinity in a sequence-independent manner, while isolated subunits bind DNA with low affinity by themselves. Associates with enzymatically active telomerase. The chain is CST complex subunit CTC1 from Arabidopsis thaliana (Mouse-ear cress).